Here is a 991-residue protein sequence, read N- to C-terminus: Translation initiation factor IF-2 (991 aa).

Disordered regions lie at residues S53–T85, V97–E175, and G312–G395. Basic and acidic residues-rich tracts occupy residues V97–Q113 and E125–E175. Residues A323–K338 are compositionally biased toward low complexity. Basic and acidic residues predominate over residues P339–K349. The region spanning P491–E658 is the tr-type G domain. The interval G500 to T507 is G1. G500–T507 is a binding site for GTP. The segment at G525–H529 is G2. Residues D546 to G549 are G3. GTP-binding positions include D546–H550 and N600–D603. Residues N600–D603 are G4. The tract at residues S636–K638 is G5.

Belongs to the TRAFAC class translation factor GTPase superfamily. Classic translation factor GTPase family. IF-2 subfamily.

The protein localises to the cytoplasm. Its function is as follows. One of the essential components for the initiation of protein synthesis. Protects formylmethionyl-tRNA from spontaneous hydrolysis and promotes its binding to the 30S ribosomal subunits. Also involved in the hydrolysis of GTP during the formation of the 70S ribosomal complex. The protein is Translation initiation factor IF-2 of Leptothrix cholodnii (strain ATCC 51168 / LMG 8142 / SP-6) (Leptothrix discophora (strain SP-6)).